A 386-amino-acid chain; its full sequence is Galactokinase (386 aa).

35–38 (EHTD) serves as a coordination point for substrate. Residues serine 69 and 125–131 (GAGLSSS) each bind ATP. 2 residues coordinate Mg(2+): serine 131 and glutamate 163. The active-site Proton acceptor is aspartate 175. Substrate is bound at residue tyrosine 224.

Belongs to the GHMP kinase family. GalK subfamily.

It localises to the cytoplasm. It carries out the reaction alpha-D-galactose + ATP = alpha-D-galactose 1-phosphate + ADP + H(+). The protein operates within carbohydrate metabolism; galactose metabolism. Its function is as follows. Catalyzes the transfer of the gamma-phosphate of ATP to D-galactose to form alpha-D-galactose-1-phosphate (Gal-1-P). The protein is Galactokinase of Vibrio vulnificus (strain CMCP6).